The sequence spans 211 residues: Large ribosomal subunit protein uL3 (211 aa).

Residues 125-148 are disordered; the sequence is GPASHGSKKWHRRPGSIGQRKTPG.

The protein belongs to the universal ribosomal protein uL3 family. Part of the 50S ribosomal subunit. Forms a cluster with proteins L14 and L19. Also contacts proteins L13 and L17.

Its function is as follows. One of the primary rRNA binding proteins, it binds directly near the 3'-end of the 23S rRNA, where it nucleates assembly of the 50S subunit. The polypeptide is Large ribosomal subunit protein uL3 (rplC) (Deinococcus radiodurans (strain ATCC 13939 / DSM 20539 / JCM 16871 / CCUG 27074 / LMG 4051 / NBRC 15346 / NCIMB 9279 / VKM B-1422 / R1)).